We begin with the raw amino-acid sequence, 305 residues long: UDP-N-acetylenolpyruvoylglucosamine reductase (305 aa).

Residues Arg34–Lys199 enclose the FAD-binding PCMH-type domain. The active site involves Arg179. Ser228 serves as the catalytic Proton donor. Glu298 is a catalytic residue.

The protein belongs to the MurB family. FAD serves as cofactor.

It localises to the cytoplasm. It catalyses the reaction UDP-N-acetyl-alpha-D-muramate + NADP(+) = UDP-N-acetyl-3-O-(1-carboxyvinyl)-alpha-D-glucosamine + NADPH + H(+). The protein operates within cell wall biogenesis; peptidoglycan biosynthesis. Its function is as follows. Cell wall formation. The protein is UDP-N-acetylenolpyruvoylglucosamine reductase of Bradyrhizobium diazoefficiens (strain JCM 10833 / BCRC 13528 / IAM 13628 / NBRC 14792 / USDA 110).